The following is a 483-amino-acid chain: Inositol-pentakisphosphate 2-kinase (483 aa).

The EXKPK motif motif lies at 140–144; that stretch reads EIKPK. The disordered stretch occupies residues 279 to 298; the sequence is SNRSGEPRKMHLSESKPHCE. A compositionally biased stretch (basic and acidic residues) spans 281 to 297; the sequence is RSGEPRKMHLSESKPHC.

The protein belongs to the IPK1 type 2 family. As to expression, expressed both maternally and zygotically. Expressed in cleavage-stage embryos. Ubiquitously distributed throughout blastula stages of embryogenesis. At the onset of gastrulation, it is enriched in cells around the blastoderm margin. At shield stage, expression is detected in the deep involuted cells that contribute to mesendoderm. During mid and late gastrula stages, it is strongly expressed in axial mesendoderm. However, it is not present in the nascent tailbud at yolk plug closure (YPC) stage. Expression in axial mesendoderm is reduced at the 2 somite stage (SS). At 6 SS, it is expressed in cells surrounding Kupffer's vesicle, but apparently not within. By 10 SS, it is no longer detected as a specific signal above background.

The protein resides in the cytoplasm. It localises to the nucleus. It carries out the reaction 1D-myo-inositol 1,3,4,5,6-pentakisphosphate + ATP = 1D-myo-inositol hexakisphosphate + ADP + H(+). Phosphorylates Ins(1,3,4,5,6)P5 at position 2 to form Ins(1,2,3,4,5,6)P6 (InsP6 or phytate). InsP6 is involved in many processes such as mRNA export, non-homologous end-joining, endocytosis and ion channel regulation. InsP6 also acts as a key regulator of left-right asymmetry in embryo, probably by regulating asymmetric Ca(2+) during left-right specification. The polypeptide is Inositol-pentakisphosphate 2-kinase (ippk) (Danio rerio (Zebrafish)).